The sequence spans 200 residues: Probable molybdenum cofactor guanylyltransferase (200 aa).

Residues 9-11 (LAG), Lys21, Asp69, and Asp100 contribute to the GTP site. Residue Asp100 participates in Mg(2+) binding.

It belongs to the MobA family. Mg(2+) serves as cofactor.

It is found in the cytoplasm. It carries out the reaction Mo-molybdopterin + GTP + H(+) = Mo-molybdopterin guanine dinucleotide + diphosphate. Functionally, transfers a GMP moiety from GTP to Mo-molybdopterin (Mo-MPT) cofactor (Moco or molybdenum cofactor) to form Mo-molybdopterin guanine dinucleotide (Mo-MGD) cofactor. This Bacillus cereus (strain G9842) protein is Probable molybdenum cofactor guanylyltransferase.